Reading from the N-terminus, the 273-residue chain is Putative tyrosine-protein phosphatase H16_A0669 (273 aa).

The first 15 residues, 1–15 (MIKWLQRAGCLSAHA), serve as a signal peptide directing secretion. C169 serves as the catalytic Phosphocysteine intermediate.

It belongs to the protein-tyrosine phosphatase family.

The enzyme catalyses O-phospho-L-tyrosyl-[protein] + H2O = L-tyrosyl-[protein] + phosphate. This chain is Putative tyrosine-protein phosphatase H16_A0669, found in Cupriavidus necator (strain ATCC 17699 / DSM 428 / KCTC 22496 / NCIMB 10442 / H16 / Stanier 337) (Ralstonia eutropha).